A 129-amino-acid chain; its full sequence is Putative reactive intermediate deaminase TdcF (129 aa).

Residue lysine 58 is modified to N6-(pyridoxal phosphate)lysine. Residues 105-107 (RSC) and glutamate 120 each bind substrate.

It belongs to the RutC family. As to quaternary structure, homotrimer.

It participates in amino-acid degradation; L-threonine degradation via propanoate pathway. Functionally, may be a post-translational regulator that controls the metabolic fate of L-threonine or the potentially toxic intermediate 2-ketobutyrate. The chain is Putative reactive intermediate deaminase TdcF (tdcF) from Escherichia coli O6:H1 (strain CFT073 / ATCC 700928 / UPEC).